Consider the following 479-residue polypeptide: Probable aspartic-type endopeptidase OPSB (479 aa).

The signal sequence occupies residues M1–A19. A Peptidase A1 domain is found at S58–A393. N68 carries an N-linked (GlcNAc...) asparagine glycan. D76 is an active-site residue. The N-linked (GlcNAc...) asparagine glycan is linked to N121. D275 is a catalytic residue. N-linked (GlcNAc...) asparagine glycosylation is present at N398. The disordered stretch occupies residues L435 to P454. The GPI-anchor amidated glycine moiety is linked to residue G451. Positions A452–M479 are cleaved as a propeptide — removed in mature form.

The protein belongs to the peptidase A1 family.

The protein resides in the cell membrane. Probable GPI-anchored aspartic-type endopeptidase which contributes to virulence. The polypeptide is Probable aspartic-type endopeptidase OPSB (OPSB) (Arthroderma otae (strain ATCC MYA-4605 / CBS 113480) (Microsporum canis)).